A 228-amino-acid polypeptide reads, in one-letter code: Cytidylate kinase (228 aa).

ATP is bound at residue 11–19; that stretch reads GPASAGKST.

Belongs to the cytidylate kinase family. Type 1 subfamily.

Its subcellular location is the cytoplasm. The enzyme catalyses CMP + ATP = CDP + ADP. It carries out the reaction dCMP + ATP = dCDP + ADP. The chain is Cytidylate kinase from Limosilactobacillus reuteri (strain DSM 20016) (Lactobacillus reuteri).